Reading from the N-terminus, the 374-residue chain is MNFNKLKFGATIGIIGGGQLGKMMAQSAQKMGYKVVVLDPSEDCPCRYVAHEFIQAKYDDEKALNQLGQKCDVITYEFENISAQQLKLLCEKYNIPQGYQAIQLLQDRLTEKETLKSAGTKVVPFISVKESTDIDKAIETLGYPFIVKTRFGGYDGKGQVLINNEKDLQEGFKLIETSECVAEKYLNIKKEVSLTVTRGNNNQITFFPLQENEHRNQILFKTIVPARIDKTAEAKEQVNKIIQSIHFIGTFTVEFFIDSNNQLYVNEIAPRPHNSGHYSIEACDYSQFDTHILAVTGQSLPNSIELLKPAVMMNLLGKDLDLLENEFNEHPEWHLHIYGKSERKDSRKMGHMTVLTNDVNQTEQDMYAKFEGSN.

Residues R108, K148, 153–159 (GYDGKGQ), 183–186 (EKYL), E191, H214, and 266–267 (NE) contribute to the ATP site. The ATP-grasp domain occupies 112 to 296 (KETLKSAGTK…QFDTHILAVT (185 aa)).

The protein belongs to the PurK/PurT family. Homodimer.

The catalysed reaction is 5-amino-1-(5-phospho-beta-D-ribosyl)imidazole + hydrogencarbonate + ATP = 5-carboxyamino-1-(5-phospho-D-ribosyl)imidazole + ADP + phosphate + 2 H(+). It functions in the pathway purine metabolism; IMP biosynthesis via de novo pathway; 5-amino-1-(5-phospho-D-ribosyl)imidazole-4-carboxylate from 5-amino-1-(5-phospho-D-ribosyl)imidazole (N5-CAIR route): step 1/2. Its function is as follows. Catalyzes the ATP-dependent conversion of 5-aminoimidazole ribonucleotide (AIR) and HCO(3)(-) to N5-carboxyaminoimidazole ribonucleotide (N5-CAIR). This is N5-carboxyaminoimidazole ribonucleotide synthase from Staphylococcus aureus (strain COL).